We begin with the raw amino-acid sequence, 328 residues long: MEGSSNSPDRQSSGGSPPEERGGGGSGGGGGRSAAGEPVRSRWTPKPEQILILESIFNSGMVNPPKDETVRIRKLLERFGAVGDANVFYWFQNRRSRSRRRQRQMQAAAAAAAAAASSSSPSANTSPAAASAATVQVGLPPGAVVHTMAMGGSACQYEQQASSSSSSGSTGGSSLGLFAHGAGASGAGGYLQASCGASASASSALAPGLMGDVVDSGGSDDLFAISRQMGFVGSPRCSPASSPATPSSAATAAQQQFYSCQLPAATITVFINGVPMEMPRGPIDLRAMFGQDVMLVHSTGALLPVNDYGILMQSLQIGESYFLVARPP.

Over residues 1–11 (MEGSSNSPDRQ) the composition is skewed to polar residues. Residues 1 to 45 (MEGSSNSPDRQSSGGSPPEERGGGGSGGGGGRSAAGEPVRSRWTP) are disordered. Positions 23 to 33 (GGGSGGGGGRS) are enriched in gly residues. Positions 38-102 (PVRSRWTPKP…NRRSRSRRRQ (65 aa)) form a DNA-binding region, homeobox; WUS-type.

This sequence belongs to the WUS homeobox family.

Its subcellular location is the nucleus. Functionally, transcription factor which may be involved in developmental processes. This chain is WUSCHEL-related homeobox 6 (WOX6), found in Oryza sativa subsp. japonica (Rice).